A 102-amino-acid chain; its full sequence is Keratinocyte differentiation-associated protein (102 aa).

The signal sequence occupies residues 1 to 22 (MKIPILPVVALLSLLALHAVQG).

In terms of tissue distribution, expression restricted to suprabasal keratinocytes of the epidermis.

It localises to the secreted. In terms of biological role, may act as a soluble regulator of keratinocyte differentiation. May play an important role in embryonic skin morphogenesis. This Mus musculus (Mouse) protein is Keratinocyte differentiation-associated protein.